We begin with the raw amino-acid sequence, 236 residues long: Ion-translocating oxidoreductase complex subunit E (236 aa).

6 consecutive transmembrane segments (helical) span residues 18–38, 39–59, 69–89, 92–112, 128–148, and 182–202; these read ALVQ…ATNA, LGLG…VSAL, IPIY…LINA, FGLY…CIVI, ALDG…LGAL, and PFLL…MLAF. The disordered stretch occupies residues 217-236; sequence RSAVGQALRGAAPTDNHEQA.

It belongs to the NqrDE/RnfAE family. In terms of assembly, the complex is composed of six subunits: RnfA, RnfB, RnfC, RnfD, RnfE and RnfG.

The protein localises to the cell inner membrane. Part of a membrane-bound complex that couples electron transfer with translocation of ions across the membrane. The chain is Ion-translocating oxidoreductase complex subunit E from Edwardsiella ictaluri (strain 93-146).